Here is a 408-residue protein sequence, read N- to C-terminus: Na(+)-translocating NADH-quinone reductase subunit F (408 aa).

A helical membrane pass occupies residues 4 to 24 (VYLGVGMFTAIVLVLVLVILF). The 95-residue stretch at 33 to 127 (GDIIIGINGD…DMEIELDEEI (95 aa)) folds into the 2Fe-2S ferredoxin-type domain. [2Fe-2S] cluster contacts are provided by C70, C76, C79, and C111. The FAD-binding FR-type domain occupies 130 to 270 (IKKWECDVIS…SGPFGEFFAK (141 aa)).

This sequence belongs to the NqrF family. Composed of six subunits; NqrA, NqrB, NqrC, NqrD, NqrE and NqrF. Requires [2Fe-2S] cluster as cofactor. FAD is required as a cofactor.

The protein localises to the cell inner membrane. It catalyses the reaction a ubiquinone + n Na(+)(in) + NADH + H(+) = a ubiquinol + n Na(+)(out) + NAD(+). NQR complex catalyzes the reduction of ubiquinone-1 to ubiquinol by two successive reactions, coupled with the transport of Na(+) ions from the cytoplasm to the periplasm. The first step is catalyzed by NqrF, which accepts electrons from NADH and reduces ubiquinone-1 to ubisemiquinone by a one-electron transfer pathway. The sequence is that of Na(+)-translocating NADH-quinone reductase subunit F from Shewanella denitrificans (strain OS217 / ATCC BAA-1090 / DSM 15013).